We begin with the raw amino-acid sequence, 590 residues long: Acetylcholinesterase (590 aa).

The N-terminal stretch at 1 to 24 (MREMNLLVTSSLGVLLHLVVLCQA) is a signal peptide. N-linked (GlcNAc...) asparagine glycosylation occurs at Asn-83. Residues Cys-91 and Cys-118 are joined by a disulfide bond. Ser-224 (acyl-ester intermediate) is an active-site residue. Cys-278 and Cys-289 are disulfide-bonded. The active-site Charge relay system is Glu-351. Cys-426 and Cys-545 are oxidised to a cystine. A glycan (N-linked (GlcNAc...) asparagine) is linked at Asn-440. His-464 serves as the catalytic Charge relay system. N-linked (GlcNAc...) asparagine glycans are attached at residues Asn-481 and Asn-557. Ser-567 carries GPI-anchor amidated serine lipidation. The propeptide at 568–590 (SGTSSSKGIIFYVLFSILYLIFY) is removed in mature form.

This sequence belongs to the type-B carboxylesterase/lipase family. As to quaternary structure, isoform H form is a homodimer; the asymmetric form is a disulfide-bonded oligomer composed of a collagenic subunit (Q) and a variable number of T catalytic subunits. An interchain disulfide bond is present in what becomes position 596 of the T isoform. Found in the synapses and to a lower extent in extrajunctional areas of muscle and nerve, and on erythrocyte membranes.

It is found in the cell membrane. The protein resides in the synapse. It catalyses the reaction acetylcholine + H2O = choline + acetate + H(+). Terminates signal transduction at the neuromuscular junction by rapid hydrolysis of the acetylcholine released into the synaptic cleft. May be involved in cell-cell interactions. The polypeptide is Acetylcholinesterase (ache) (Torpedo marmorata (Marbled electric ray)).